We begin with the raw amino-acid sequence, 212 residues long: Lysozyme g-like protein 2 (212 aa).

An N-terminal signal peptide occupies residues 1-19; that stretch reads MLSSVVFWGLIALIGTSRG. Disulfide bonds link cysteine 39-cysteine 92 and cysteine 53-cysteine 61. Residue glutamate 105 is part of the active site.

It belongs to the glycosyl hydrolase 23 family. Strong expression detected in the eye and weak expression in the testis. No expression is observed in any other tissues.

Its subcellular location is the secreted. Functionally, may act as a potent antibacterial protein that may play a role in the innate immunity. In Homo sapiens (Human), this protein is Lysozyme g-like protein 2 (LYG2).